Consider the following 287-residue polypeptide: S-methyl-5'-thioadenosine phosphorylase (287 aa).

Residues Thr13 and 55 to 56 (RH) contribute to the phosphate site. Substrate is bound at residue Met186. Residue Thr187 coordinates phosphate. A substrate-binding site is contributed by 210-212 (DYD).

It belongs to the PNP/MTAP phosphorylase family. MTAP subfamily. Homohexamer. Dimer of a homotrimer.

The catalysed reaction is S-methyl-5'-thioadenosine + phosphate = 5-(methylsulfanyl)-alpha-D-ribose 1-phosphate + adenine. The protein operates within amino-acid biosynthesis; L-methionine biosynthesis via salvage pathway; S-methyl-5-thio-alpha-D-ribose 1-phosphate from S-methyl-5'-thioadenosine (phosphorylase route): step 1/1. Catalyzes the reversible phosphorylation of S-methyl-5'-thioadenosine (MTA) to adenine and 5-methylthioribose-1-phosphate. Involved in the breakdown of MTA, a major by-product of polyamine biosynthesis. Responsible for the first step in the methionine salvage pathway after MTA has been generated from S-adenosylmethionine. Has broad substrate specificity with 6-aminopurine nucleosides as preferred substrates. In Leptospira interrogans serogroup Icterohaemorrhagiae serovar copenhageni (strain Fiocruz L1-130), this protein is S-methyl-5'-thioadenosine phosphorylase.